A 466-amino-acid chain; its full sequence is Integrin-linked protein kinase homolog pat-4 (466 aa).

ANK repeat units lie at residues 50–79, 83–112, and 116–145; these read HAFSLLHWAAKGGHVAIAEMLLSRGARVNS, GDDTSLHLAAAHGHRQIVVKLLSRKADVNA, and HGMTPLHYACFWGYEQIAEDLISCGAAVNV. The 256-residue stretch at 210-465 folds into the Protein kinase domain; that stretch reads LNLITKIAES…QIIPILERMI (256 aa).

This sequence belongs to the protein kinase superfamily. TKL Ser/Thr protein kinase family. Interacts (via protein kinase domain) with unc-112 (via N-terminus). Interacts (via ANK repeats) with unc-97 (via first LIM domain). Interacts (via protein kinase domain) with pat-6 (via C-terminus CH domain). May form a complex with unc-112, unc-97 and pat-6. Does not interact with integrin pat-3. Component of an integrin containing attachment complex, composed of at least pat-2, pat-3, pat-4, pat-6, unc-52, unc-97 and unc-112. In terms of tissue distribution, expressed in body wall muscle.

It localises to the cytoplasm. The protein localises to the myofibril. It is found in the sarcomere. Its subcellular location is the m line. The protein resides in the basal cell membrane. Functionally, probable pseudokinase that acts as an adapter protein. Component of an integrin containing attachment complex, which is required for muscle development and maintenance. Involved in the assembly of dense bodies and M lines during body wall muscle development by recruiting several of their components including integrin pat-3, cpna-1, unc-89 and unc-112 to integrin-mediated attachment sites. Plays a role in distal tip cell (DTC) migration and in oocyte development probably by regulating the actin cytoskeleton. During the formation of neuromuscular junctions at the larval stage, negatively regulates membrane protrusion from body wall muscles. May be involved in thermotolerance and lifespan. The protein is Integrin-linked protein kinase homolog pat-4 of Caenorhabditis elegans.